Reading from the N-terminus, the 426-residue chain is Glutamate-1-semialdehyde 2,1-aminomutase (426 aa).

The residue at position 265 (lysine 265) is an N6-(pyridoxal phosphate)lysine.

Belongs to the class-III pyridoxal-phosphate-dependent aminotransferase family. HemL subfamily. Homodimer. Pyridoxal 5'-phosphate is required as a cofactor.

Its subcellular location is the cytoplasm. It catalyses the reaction (S)-4-amino-5-oxopentanoate = 5-aminolevulinate. Its pathway is porphyrin-containing compound metabolism; protoporphyrin-IX biosynthesis; 5-aminolevulinate from L-glutamyl-tRNA(Glu): step 2/2. The chain is Glutamate-1-semialdehyde 2,1-aminomutase from Escherichia coli O157:H7.